Reading from the N-terminus, the 180-residue chain is Large ribosomal subunit protein uL5 (180 aa).

Belongs to the universal ribosomal protein uL5 family. Part of the 50S ribosomal subunit; part of the 5S rRNA/L5/L18/L25 subcomplex. Contacts the 5S rRNA and the P site tRNA. Forms a bridge to the 30S subunit in the 70S ribosome.

This is one of the proteins that bind and probably mediate the attachment of the 5S RNA into the large ribosomal subunit, where it forms part of the central protuberance. In the 70S ribosome it contacts protein S13 of the 30S subunit (bridge B1b), connecting the 2 subunits; this bridge is implicated in subunit movement. Contacts the P site tRNA; the 5S rRNA and some of its associated proteins might help stabilize positioning of ribosome-bound tRNAs. In Stenotrophomonas maltophilia (strain K279a), this protein is Large ribosomal subunit protein uL5.